Reading from the N-terminus, the 395-residue chain is Lipoyl synthase, mitochondrial (395 aa).

The N-terminal 14 residues, 1–14, are a transit peptide targeting the mitochondrion; sequence MISLRSISRSPAVQ. Cysteine 112, cysteine 117, cysteine 123, cysteine 142, cysteine 146, cysteine 149, and serine 357 together coordinate [4Fe-4S] cluster. The Radical SAM core domain maps to 127-346; the sequence is KKSEATATIM…RDTALQMGFL (220 aa).

It belongs to the radical SAM superfamily. Lipoyl synthase family. It depends on [4Fe-4S] cluster as a cofactor.

It is found in the mitochondrion. It carries out the reaction [[Fe-S] cluster scaffold protein carrying a second [4Fe-4S](2+) cluster] + N(6)-octanoyl-L-lysyl-[protein] + 2 oxidized [2Fe-2S]-[ferredoxin] + 2 S-adenosyl-L-methionine + 4 H(+) = [[Fe-S] cluster scaffold protein] + N(6)-[(R)-dihydrolipoyl]-L-lysyl-[protein] + 4 Fe(3+) + 2 hydrogen sulfide + 2 5'-deoxyadenosine + 2 L-methionine + 2 reduced [2Fe-2S]-[ferredoxin]. It participates in protein modification; protein lipoylation via endogenous pathway; protein N(6)-(lipoyl)lysine from octanoyl-[acyl-carrier-protein]: step 2/2. In terms of biological role, catalyzes the radical-mediated insertion of two sulfur atoms into the C-6 and C-8 positions of the octanoyl moiety bound to the lipoyl domains of lipoate-dependent enzymes, thereby converting the octanoylated domains into lipoylated derivatives. The chain is Lipoyl synthase, mitochondrial from Debaryomyces hansenii (strain ATCC 36239 / CBS 767 / BCRC 21394 / JCM 1990 / NBRC 0083 / IGC 2968) (Yeast).